Here is a 703-residue protein sequence, read N- to C-terminus: MTDVLTRYNSGKLWDFDGGIHPPEMKSQSNSTPISTALLAEDYYVPVKQHAGNAGNLLVKEGDYVLKGQPLTLGDGLRVLPVHAPTSGTVVAIEPHIAAHPSGLSELAVHIHADGKDQWRPQNPTEDYFTHTPERLIEKIYRAGVAGLGGAVFPTGAKVDAALGKVKLLIINGAECEPYITCDDRLMRDYAAEIIEGVRILRYILRPEKVVIAIEDNKPEAVNALRTSLQGANDMDIRVIPTKYPSGAAKQLIYVLTGMEVPHGQRSSSIGVLMQNVGTAFAVKRAVINDEPLIERVVTLTGDKIPHKGNQWVRLGTPIDFILKHVGYQPDNRFPVFVGGPMMGLIVPDLRAPITKTANCLLAPDHFEYDPQATEQACIRCSACSDACPVHLMPQQMYWYARAEDHEKSNQYQLMDCIECGLCAYVCPSHIPLIQYFRQEKAKIWDIEAKARKSEEAKIRFEARQARLEREEQARKARSQRAAAARREELAANKGEDPVQAALARLKAKKAGEAPETGGSAQGAPHIKTIRTEKGQSVPDNSEITALRRARRLARQQTNGNSPVSSASNSDSATISADNTHSTPKTAQNQTAPDPKKAAVAVAIARAKAKKAAQTTTGETVTENVTEKTAQNPTAPDPKKAAVAAAIARAKAKKAAQATTGETATEKTAQNPTAPDPKKAAVAAAIARAKAKKAAMLAESEKK.

4Fe-4S ferredoxin-type domains lie at 369 to 398 and 408 to 437; these read YDPQATEQACIRCSACSDACPVHLMPQQMY and KSNQYQLMDCIECGLCAYVCPSHIPLIQYF. C378, C381, C384, C388, C417, C420, C423, and C427 together coordinate [4Fe-4S] cluster. 2 disordered regions span residues 467 to 542 and 555 to 680; these read RLER…PDNS and RQQT…PKKA. The span at 485–497 shows a compositional bias: basic and acidic residues; the sequence is ARREELAANKGED. The span at 559 to 577 shows a compositional bias: low complexity; sequence NGNSPVSSASNSDSATISA. Positions 578 to 592 are enriched in polar residues; the sequence is DNTHSTPKTAQNQTA. Composition is skewed to low complexity over residues 598–629 and 641–669; these read AAVAVAIARAKAKKAAQTTTGETVTENVTEKT and AAVAAAIARAKAKKAAQATTGETATEKTA.

The protein belongs to the 4Fe4S bacterial-type ferredoxin family. RnfC subfamily. As to quaternary structure, the complex is composed of six subunits: RnfA, RnfB, RnfC, RnfD, RnfE and RnfG. [4Fe-4S] cluster serves as cofactor.

The protein localises to the cell inner membrane. Its function is as follows. Part of a membrane-bound complex that couples electron transfer with translocation of ions across the membrane. The polypeptide is Ion-translocating oxidoreductase complex subunit C (Actinobacillus succinogenes (strain ATCC 55618 / DSM 22257 / CCUG 43843 / 130Z)).